Reading from the N-terminus, the 147-residue chain is MVHLTPEEKSAVTALWGKVNVDEVGGEALGRLLVVYPWTQRFFESFGDLSTPDAVMGNPKVKAHGKKVLGAFSDGLAHLDNLKGTFATLSELHCDKLHVDPENFRLLGNVLVCVLAHHFGKEFTPPVQAAYQKVVAGVANALAHKYH.

N-acetylvaline is present on valine 2. The region spanning 3-147 (HLTPEEKSAV…VANALAHKYH (145 aa)) is the Globin domain. Position 13 is a phosphothreonine (threonine 13). Residue serine 45 is modified to Phosphoserine. An N6-acetyllysine modification is found at lysine 60. A heme b-binding site is contributed by histidine 64. Lysine 83 bears the N6-acetyllysine mark. Histidine 93 serves as a coordination point for heme b. Cysteine 94 carries the S-nitrosocysteine modification. Lysine 145 is modified (N6-acetyllysine).

This sequence belongs to the globin family. Heterotetramer of two alpha chains and two beta chains in adult hemoglobin A (HbA). Red blood cells.

Involved in oxygen transport from the lung to the various peripheral tissues. In Pan paniscus (Pygmy chimpanzee), this protein is Hemoglobin subunit beta (HBB).